We begin with the raw amino-acid sequence, 256 residues long: Ribosomal RNA small subunit methyltransferase J (256 aa).

S-adenosyl-L-methionine-binding positions include 101-102 (RD), 117-118 (ER), 153-154 (SS), and Asp176.

The protein belongs to the methyltransferase superfamily. RsmJ family.

It is found in the cytoplasm. It catalyses the reaction guanosine(1516) in 16S rRNA + S-adenosyl-L-methionine = N(2)-methylguanosine(1516) in 16S rRNA + S-adenosyl-L-homocysteine + H(+). Specifically methylates the guanosine in position 1516 of 16S rRNA. This Photobacterium profundum (strain SS9) protein is Ribosomal RNA small subunit methyltransferase J.